Consider the following 828-residue polypeptide: Translation initiation factor IF-2 (828 aa).

Disordered regions lie at residues 48–76 and 112–137; these read SYSG…SEEF and ASQE…EPKI. Residues 49 to 58 show a composition bias toward polar residues; sequence YSGSTTTLSL. Low complexity predominate over residues 65–74; it reads LETGSSSGSE. Residues 116–126 show a composition bias toward acidic residues; the sequence is DPIEVEQEESS. Residues 127–137 are compositionally biased toward basic and acidic residues; sequence DTNKVKEEPKI. The region spanning 326 to 496 is the tr-type G domain; the sequence is SRAPVVTVMG…LLIAEMQNLK (171 aa). Residues 335–342 are G1; sequence GHVDHGKT. 335-342 provides a ligand contact to GTP; sequence GHVDHGKT. Positions 360-364 are G2; the sequence is GITQH. Residues 382–385 form a G3 region; that stretch reads DTPG. Residues 382–386 and 436–439 contribute to the GTP site; these read DTPGH and NKID. The interval 436–439 is G4; sequence NKID. Residues 472 to 474 form a G5 region; that stretch reads SAL.

It belongs to the TRAFAC class translation factor GTPase superfamily. Classic translation factor GTPase family. IF-2 subfamily.

The protein resides in the cytoplasm. Functionally, one of the essential components for the initiation of protein synthesis. Protects formylmethionyl-tRNA from spontaneous hydrolysis and promotes its binding to the 30S ribosomal subunits. Also involved in the hydrolysis of GTP during the formation of the 70S ribosomal complex. The sequence is that of Translation initiation factor IF-2 from Rickettsia bellii (strain RML369-C).